A 356-amino-acid chain; its full sequence is Fructose-1,6-bisphosphatase class 1 (356 aa).

4 residues coordinate Mg(2+): Glu91, Asp113, Leu115, and Asp116. Substrate contacts are provided by residues 116-119 (DGSS) and Asn208. A Mg(2+)-binding site is contributed by Glu280.

It belongs to the FBPase class 1 family. Homotetramer. Mg(2+) is required as a cofactor.

It localises to the cytoplasm. The catalysed reaction is beta-D-fructose 1,6-bisphosphate + H2O = beta-D-fructose 6-phosphate + phosphate. The protein operates within carbohydrate biosynthesis; gluconeogenesis. The protein is Fructose-1,6-bisphosphatase class 1 of Methylacidiphilum infernorum (isolate V4) (Methylokorus infernorum (strain V4)).